The following is a 152-amino-acid chain: Endoribonuclease YbeY (152 aa).

Histidine 114, histidine 118, and histidine 124 together coordinate Zn(2+).

The protein belongs to the endoribonuclease YbeY family. Requires Zn(2+) as cofactor.

It is found in the cytoplasm. Single strand-specific metallo-endoribonuclease involved in late-stage 70S ribosome quality control and in maturation of the 3' terminus of the 16S rRNA. The chain is Endoribonuclease YbeY from Coxiella burnetii (strain CbuK_Q154) (Coxiella burnetii (strain Q154)).